We begin with the raw amino-acid sequence, 784 residues long: Replication protein A 70 kDa DNA-binding subunit E (784 aa).

A disordered region spans residues 114–224 (HPVPGGKHND…NRGPVARNEA (111 aa)). Polar residues-rich tracts occupy residues 132-148 (KFNT…QVNN) and 167-190 (SSVP…NGVT). The segment at residues 241–327 (WTIKARVTNK…RNDYEIMLDN (87 aa)) is a DNA-binding region (OB). Residues 532 to 558 (CPIMNGDRPCSKKVTDNGDGTWRCEKC) form a C4-type zinc finger. Disordered regions lie at residues 678-707 (LPIN…PSSV) and 746-784 (AKCP…VGSY). Polar residues predominate over residues 695–707 (GIGSSGTRDPSSV). The segment covering 760–776 (YMGGSYRGTTGSYGGGL) has biased composition (gly residues).

This sequence belongs to the replication factor A protein 1 family. Heterotrimer of RPA1, RPA2 and RPA3 (canonical replication protein A complex).

It localises to the nucleus. Its function is as follows. Component of the replication protein A complex (RPA) required for DNA recombination, repair and replication. The activity of RPA is mediated by single-stranded DNA binding and protein interactions. Probably involved in repair of double-strand DNA breaks (DSBs) induced by genotoxic stresses. The sequence is that of Replication protein A 70 kDa DNA-binding subunit E (RPA1E) from Arabidopsis thaliana (Mouse-ear cress).